Here is a 155-residue protein sequence, read N- to C-terminus: Large ribosomal subunit protein uL22 (155 aa).

The protein belongs to the universal ribosomal protein uL22 family. As to quaternary structure, part of the 50S ribosomal subunit.

Functionally, this protein binds specifically to 23S rRNA. It makes multiple contacts with different domains of the 23S rRNA in the assembled 50S subunit and ribosome. The globular domain of the protein is located near the polypeptide exit tunnel on the outside of the subunit, while an extended beta-hairpin is found that lines the wall of the exit tunnel in the center of the 70S ribosome. The polypeptide is Large ribosomal subunit protein uL22 (Pyrococcus furiosus (strain ATCC 43587 / DSM 3638 / JCM 8422 / Vc1)).